The chain runs to 269 residues: 4-hydroxy-tetrahydrodipicolinate reductase (269 aa).

NAD(+) contacts are provided by residues 9–14 (GAGGRM) and Glu-35. NADP(+) is bound at residue Arg-36. NAD(+) contacts are provided by residues 98-100 (GTT) and 122-125 (ASNY). The active-site Proton donor/acceptor is His-155. His-156 is a binding site for (S)-2,3,4,5-tetrahydrodipicolinate. Lys-159 (proton donor) is an active-site residue. 165–166 (GT) is a binding site for (S)-2,3,4,5-tetrahydrodipicolinate.

The protein belongs to the DapB family.

The protein resides in the cytoplasm. The catalysed reaction is (S)-2,3,4,5-tetrahydrodipicolinate + NAD(+) + H2O = (2S,4S)-4-hydroxy-2,3,4,5-tetrahydrodipicolinate + NADH + H(+). It catalyses the reaction (S)-2,3,4,5-tetrahydrodipicolinate + NADP(+) + H2O = (2S,4S)-4-hydroxy-2,3,4,5-tetrahydrodipicolinate + NADPH + H(+). It participates in amino-acid biosynthesis; L-lysine biosynthesis via DAP pathway; (S)-tetrahydrodipicolinate from L-aspartate: step 4/4. Its function is as follows. Catalyzes the conversion of 4-hydroxy-tetrahydrodipicolinate (HTPA) to tetrahydrodipicolinate. In Actinobacillus pleuropneumoniae serotype 7 (strain AP76), this protein is 4-hydroxy-tetrahydrodipicolinate reductase.